Consider the following 277-residue polypeptide: Large ribosomal subunit protein uL2 (277 aa).

Residues 215–277 form a disordered region; the sequence is GIRPTVRGSV…KLIVKRRNDK (63 aa). The segment covering 264 to 277 has biased composition (basic and acidic residues); it reads KYSDKLIVKRRNDK.

The protein belongs to the universal ribosomal protein uL2 family. As to quaternary structure, part of the 50S ribosomal subunit. Forms a bridge to the 30S subunit in the 70S ribosome.

Its function is as follows. One of the primary rRNA binding proteins. Required for association of the 30S and 50S subunits to form the 70S ribosome, for tRNA binding and peptide bond formation. It has been suggested to have peptidyltransferase activity; this is somewhat controversial. Makes several contacts with the 16S rRNA in the 70S ribosome. The polypeptide is Large ribosomal subunit protein uL2 (Clostridium acetobutylicum (strain ATCC 824 / DSM 792 / JCM 1419 / IAM 19013 / LMG 5710 / NBRC 13948 / NRRL B-527 / VKM B-1787 / 2291 / W)).